The following is a 108-amino-acid chain: ATP-dependent Clp protease adapter protein ClpS (108 aa).

This sequence belongs to the ClpS family. As to quaternary structure, binds to the N-terminal domain of the chaperone ClpA.

In terms of biological role, involved in the modulation of the specificity of the ClpAP-mediated ATP-dependent protein degradation. The protein is ATP-dependent Clp protease adapter protein ClpS of Leptospira borgpetersenii serovar Hardjo-bovis (strain JB197).